The chain runs to 86 residues: Small ribosomal subunit protein bS18 (86 aa).

This sequence belongs to the bacterial ribosomal protein bS18 family. Part of the 30S ribosomal subunit. Forms a tight heterodimer with protein bS6.

Functionally, binds as a heterodimer with protein bS6 to the central domain of the 16S rRNA, where it helps stabilize the platform of the 30S subunit. This is Small ribosomal subunit protein bS18 from Campylobacter jejuni subsp. jejuni serotype O:6 (strain 81116 / NCTC 11828).